Reading from the N-terminus, the 165-residue chain is Small ribosomal subunit protein uS5 (165 aa).

The 64-residue stretch at 10–73 folds into the S5 DRBM domain; it reads LKEKVVFINR…EDAKKHLVEV (64 aa).

Belongs to the universal ribosomal protein uS5 family. Part of the 30S ribosomal subunit. Contacts proteins S4 and S8.

Functionally, with S4 and S12 plays an important role in translational accuracy. Located at the back of the 30S subunit body where it stabilizes the conformation of the head with respect to the body. The chain is Small ribosomal subunit protein uS5 from Clostridium novyi (strain NT).